The chain runs to 71 residues: Ceratotoxin-D (71 aa).

Residues 1–23 (MANLKAVFLICILAFIAFHCVVG) form the signal peptide. Positions 24–35 (APTAEDSIVVKR) are excised as a propeptide.

As to quaternary structure, homomer of four to six subunits.

Its subcellular location is the secreted. Its function is as follows. Female-specific peptides with potent activity against Gram-positive and Gram-negative bacteria. They have as well hemolytic activity. The chain is Ceratotoxin-D (CTXD) from Ceratitis capitata (Mediterranean fruit fly).